We begin with the raw amino-acid sequence, 431 residues long: UDP-N-acetylglucosamine 1-carboxyvinyltransferase (431 aa).

Residue 22–23 (KN) coordinates phosphoenolpyruvate. R92 contacts UDP-N-acetyl-alpha-D-glucosamine. D116 serves as the catalytic Proton donor. UDP-N-acetyl-alpha-D-glucosamine is bound by residues 121 to 125 (RPIDQ), D307, and I330.

It belongs to the EPSP synthase family. MurA subfamily.

Its subcellular location is the cytoplasm. The catalysed reaction is phosphoenolpyruvate + UDP-N-acetyl-alpha-D-glucosamine = UDP-N-acetyl-3-O-(1-carboxyvinyl)-alpha-D-glucosamine + phosphate. The protein operates within cell wall biogenesis; peptidoglycan biosynthesis. Its function is as follows. Cell wall formation. Adds enolpyruvyl to UDP-N-acetylglucosamine. This chain is UDP-N-acetylglucosamine 1-carboxyvinyltransferase, found in Lactobacillus acidophilus (strain ATCC 700396 / NCK56 / N2 / NCFM).